The sequence spans 271 residues: GATA transcription factor 19 (271 aa).

Residues 1–23 form a disordered region; that stretch reads MAAEPPADGRDPPADDGAAGDGA. In terms of domain architecture, Tify spans 33 to 68; sequence LSAASEQLTLVYQGEVYVFDPVPPQKVQAVLLVLGG. The region spanning 95–137 is the CCT domain; the sequence is RVASLMRFREKRKERCFDKKIRYSVRKEVAQKMKRRKGQFAGR. The GATA-type zinc finger occupies 166–193; that stretch reads CQNCGISSRLTPAMRRGPAGPRSLCNAC. The tract at residues 238–271 is disordered; sequence NQTTMKTDTEMVPEQEQKADVLPPTKEEDSMATS. Positions 252–271 are enriched in basic and acidic residues; it reads QEQKADVLPPTKEEDSMATS.

The protein belongs to the type IV zinc-finger family. Class C subfamily.

The protein localises to the nucleus. Its function is as follows. Transcriptional activator that specifically binds 5'-GATA-3' or 5'-GAT-3' motifs within gene promoters. In Oryza sativa subsp. japonica (Rice), this protein is GATA transcription factor 19.